The primary structure comprises 76 residues: Acyl carrier protein (76 aa).

The Carrier domain maps to 1 to 76; the sequence is MATFDDVKDV…AAIDYIESKQ (76 aa). At serine 36 the chain carries O-(pantetheine 4'-phosphoryl)serine.

The protein belongs to the acyl carrier protein (ACP) family. Post-translationally, 4'-phosphopantetheine is transferred from CoA to a specific serine of apo-ACP by AcpS. This modification is essential for activity because fatty acids are bound in thioester linkage to the sulfhydryl of the prosthetic group.

The protein localises to the cytoplasm. It participates in lipid metabolism; fatty acid biosynthesis. In terms of biological role, carrier of the growing fatty acid chain in fatty acid biosynthesis. In Deinococcus deserti (strain DSM 17065 / CIP 109153 / LMG 22923 / VCD115), this protein is Acyl carrier protein.